A 354-amino-acid polypeptide reads, in one-letter code: Threonine synthase (354 aa).

Lysine 61 is subject to N6-(pyridoxal phosphate)lysine. Residues asparagine 87, 187–191 (GNAGN), and threonine 316 each bind pyridoxal 5'-phosphate.

It belongs to the threonine synthase family. Requires pyridoxal 5'-phosphate as cofactor.

The catalysed reaction is O-phospho-L-homoserine + H2O = L-threonine + phosphate. Its pathway is amino-acid biosynthesis; L-threonine biosynthesis; L-threonine from L-aspartate: step 5/5. In terms of biological role, catalyzes the gamma-elimination of phosphate from L-phosphohomoserine and the beta-addition of water to produce L-threonine. The sequence is that of Threonine synthase (thrC) from Halalkalibacterium halodurans (strain ATCC BAA-125 / DSM 18197 / FERM 7344 / JCM 9153 / C-125) (Bacillus halodurans).